Consider the following 231-residue polypeptide: Probable transglycosylase SceD (231 aa).

An N-terminal signal peptide occupies residues Met1–Ala27. A compositionally biased stretch (polar residues) spans Ser93–Glu116. Positions Ser93–Ser152 are disordered. A compositionally biased stretch (low complexity) spans Ala119–Gln137. Polar residues predominate over residues Val138–Ser152.

This sequence belongs to the transglycosylase family. SceD subfamily.

Its subcellular location is the secreted. Functionally, is able to cleave peptidoglycan and affects clumping and separation of bacterial cells. In Staphylococcus aureus (strain Mu3 / ATCC 700698), this protein is Probable transglycosylase SceD (sceD).